The chain runs to 153 residues: Ubiquitin-conjugating enzyme E2-18 kDa (153 aa).

One can recognise a UBC core domain in the interval 2–149; it reads AATRRLTREL…AEEFTKKNAE (148 aa). Catalysis depends on Cys86, which acts as the Glycyl thioester intermediate.

This sequence belongs to the ubiquitin-conjugating enzyme family.

It catalyses the reaction S-ubiquitinyl-[E1 ubiquitin-activating enzyme]-L-cysteine + [E2 ubiquitin-conjugating enzyme]-L-cysteine = [E1 ubiquitin-activating enzyme]-L-cysteine + S-ubiquitinyl-[E2 ubiquitin-conjugating enzyme]-L-cysteine.. It functions in the pathway protein modification; protein ubiquitination. In terms of biological role, catalyzes the covalent attachment of ubiquitin to other proteins. The polypeptide is Ubiquitin-conjugating enzyme E2-18 kDa (Ubc84D) (Drosophila melanogaster (Fruit fly)).